Consider the following 509-residue polypeptide: Midnolin (509 aa).

Over residues 1–12 the composition is skewed to polar residues; the sequence is MDQHPSARSCSS. Residues 1–27 are disordered; it reads MDQHPSARSCSSRGAAPSCESVSGEPP. The Ubiquitin-like domain maps to 28–102; it reads MNLYIHSTTG…LTLVPTVEAG (75 aa). 3 disordered regions span residues 172–295, 370–404, and 448–485; these read GSSE…NTPL, QCTS…ETQP, and KRLR…EGSL. Residues 176-190 are compositionally biased toward low complexity; that stretch reads GTTGLSHGASGSASG. Positions 196 to 209 are enriched in basic residues; it reads HNPHPHHPHQHPHH. Positions 220 to 231 are enriched in pro residues; it reads AFPPSPSIPSIP. Positions 261–285 are enriched in low complexity; the sequence is PSSACAPSPSSPSPAASCPEASCSA. Positions 286–295 are enriched in polar residues; the sequence is KTSGNCNTPL. The segment covering 376-386 has biased composition (pro residues); it reads SPAPSPPPSPP. A compositionally biased stretch (low complexity) spans 387–400; sequence HTTGLTGLPTTVPS.

The protein localises to the nucleus. It is found in the cytoplasm. It localises to the cytosol. Its subcellular location is the nucleolus. Its function is as follows. Facilitates ubiquitin-independent proteasomal degradation of polycomb protein CBX4. Plays a role in inhibiting the activity of glucokinase GCK and both glucose-induced and basal insulin secretion. The polypeptide is Midnolin (midn) (Danio rerio (Zebrafish)).